We begin with the raw amino-acid sequence, 569 residues long: Endo-1,4-beta-xylanase 5 (569 aa).

Residues 1-25 form the signal peptide; that stretch reads MKNINNGFFLCMLLLLWCFVHSGIS. N-linked (GlcNAc...) asparagine glycosylation is found at N197, N261, and N307. Positions 209 to 500 constitute a GH10 domain; that stretch reads EQTKPSFLLG…NTATGDVIDK (292 aa). The active-site Proton donor is the E332. N-linked (GlcNAc...) asparagine glycosylation occurs at N346. Catalysis depends on E439, which acts as the Nucleophile. N-linked (GlcNAc...) asparagine glycans are attached at residues N490, N536, and N544.

It belongs to the glycosyl hydrolase 10 (cellulase F) family.

The catalysed reaction is Endohydrolysis of (1-&gt;4)-beta-D-xylosidic linkages in xylans.. The protein operates within glycan degradation; xylan degradation. Binds to and hydrolyzes insoluble and soluble xylan substrates. This Arabidopsis thaliana (Mouse-ear cress) protein is Endo-1,4-beta-xylanase 5.